A 587-amino-acid polypeptide reads, in one-letter code: Trans-activating transcriptional regulatory protein (587 aa).

It belongs to the nucleopolyhedrovirus IE-1 protein family.

Its function is as follows. Regulatory transcriptional protein, which trans-activates gene expression from early baculovirus promoters. Can also trans-activate its own promoter, suggesting that it is autoregulated during normal infection of insect cells. In Bombyx mori nuclear polyhedrosis virus (BmNPV), this protein is Trans-activating transcriptional regulatory protein (IE1).